The following is a 55-amino-acid chain: Cop-6 protein (55 aa).

It belongs to the transcriptional regulatory CopG/NikR family.

Functionally, acts in trans as a negative regulatory element in pE194 replication. The polypeptide is Cop-6 protein (Staphylococcus aureus).